Reading from the N-terminus, the 382-residue chain is S-adenosylmethionine synthase (382 aa).

Glu-10 contacts Mg(2+). Residue His-16 participates in ATP binding. Glu-44 lines the K(+) pocket. Positions 57 and 100 each coordinate L-methionine. Residues 166-168 (DTK), 234-237 (SGRF), Asp-245, 251-252 (RK), Ala-268, Lys-272, and Lys-276 contribute to the ATP site. Asp-245 is an L-methionine binding site. Residue Lys-276 participates in L-methionine binding.

It belongs to the AdoMet synthase family. The cofactor is Mg(2+). K(+) is required as a cofactor.

It catalyses the reaction L-methionine + ATP + H2O = S-adenosyl-L-methionine + phosphate + diphosphate. It functions in the pathway amino-acid biosynthesis; S-adenosyl-L-methionine biosynthesis; S-adenosyl-L-methionine from L-methionine: step 1/1. Catalyzes the formation of S-adenosylmethionine from methionine and ATP. The reaction comprises two steps that are both catalyzed by the same enzyme: formation of S-adenosylmethionine (AdoMet) and triphosphate, and subsequent hydrolysis of the triphosphate. This Schizosaccharomyces pombe (strain 972 / ATCC 24843) (Fission yeast) protein is S-adenosylmethionine synthase (sam1).